A 445-amino-acid polypeptide reads, in one-letter code: tRNA modification GTPase MnmE (445 aa).

The (6S)-5-formyl-5,6,7,8-tetrahydrofolate site is built by Arg-20, Glu-79, and Lys-119. The 157-residue stretch at 215–371 folds into the TrmE-type G domain; that stretch reads GLKLAIIGPP…ILKNIENIAE (157 aa). Residue Asn-225 coordinates K(+). GTP is bound by residues 225–230, 244–250, and 269–272; these read NVGKSS, SNIAGTT, and DTAG. Ser-229 provides a ligand contact to Mg(2+). Positions 244, 246, and 249 each coordinate K(+). Thr-250 contributes to the Mg(2+) binding site. A (6S)-5-formyl-5,6,7,8-tetrahydrofolate-binding site is contributed by Lys-445.

The protein belongs to the TRAFAC class TrmE-Era-EngA-EngB-Septin-like GTPase superfamily. TrmE GTPase family. In terms of assembly, homodimer. Heterotetramer of two MnmE and two MnmG subunits. The cofactor is K(+).

Its subcellular location is the cytoplasm. Its function is as follows. Exhibits a very high intrinsic GTPase hydrolysis rate. Involved in the addition of a carboxymethylaminomethyl (cmnm) group at the wobble position (U34) of certain tRNAs, forming tRNA-cmnm(5)s(2)U34. The polypeptide is tRNA modification GTPase MnmE (Rickettsia rickettsii (strain Iowa)).